A 662-amino-acid chain; its full sequence is Protein-arginine deiminase type-1 (662 aa).

Residues N153, D155, D157, D164, D175, D178, Q350, E352, K363, D370, S371, N374, F408, and L411 each coordinate Ca(2+). C644 serves as the catalytic Nucleophile.

The protein belongs to the protein arginine deiminase family. As to quaternary structure, monomer. The cofactor is Ca(2+). In terms of tissue distribution, expressed only in the epidermis and uterus.

The protein localises to the cytoplasm. The catalysed reaction is L-arginyl-[protein] + H2O = L-citrullyl-[protein] + NH4(+). Functionally, catalyzes the deimination of arginine residues of proteins. This is Protein-arginine deiminase type-1 (Padi1) from Mus musculus (Mouse).